The sequence spans 133 residues: Putative biopolymer transport protein ExbD-like 2 (133 aa).

Residues 1 to 9 (MKKVESMNV) are Cytoplasmic-facing. The helical transmembrane segment at 10 to 30 (VPFIDIMLVLLVIVLTTASFV) threads the bilayer. Residues 31 to 133 (QTSKLPISIP…LVEDKKNQKN (103 aa)) are Periplasmic-facing.

Belongs to the ExbD/TolR family.

Its subcellular location is the cell inner membrane. This chain is Putative biopolymer transport protein ExbD-like 2, found in Helicobacter pylori (strain J99 / ATCC 700824) (Campylobacter pylori J99).